A 382-amino-acid polypeptide reads, in one-letter code: Alkanesulfonate monooxygenase (382 aa).

The protein belongs to the SsuD family.

The catalysed reaction is an alkanesulfonate + FMNH2 + O2 = an aldehyde + FMN + sulfite + H2O + 2 H(+). Functionally, catalyzes the desulfonation of aliphatic sulfonates. This chain is Alkanesulfonate monooxygenase, found in Ectopseudomonas mendocina (strain ymp) (Pseudomonas mendocina).